A 193-amino-acid polypeptide reads, in one-letter code: Superoxide dismutase [Fe] (193 aa).

His-27, His-74, Asp-157, and His-161 together coordinate Fe cation.

It belongs to the iron/manganese superoxide dismutase family. As to quaternary structure, homodimer. Requires Fe cation as cofactor.

It carries out the reaction 2 superoxide + 2 H(+) = H2O2 + O2. Its function is as follows. Destroys superoxide anion radicals which are normally produced within the cells and which are toxic to biological systems. Partially complements double sodA-sodB deletions in E.coli. The chain is Superoxide dismutase [Fe] from Pseudomonas aeruginosa (strain ATCC 15692 / DSM 22644 / CIP 104116 / JCM 14847 / LMG 12228 / 1C / PRS 101 / PAO1).